Consider the following 299-residue polypeptide: Mycothiol acetyltransferase (299 aa).

N-acetyltransferase domains lie at 1–156 (MGWT…TYRG) and 149–299 (VTMR…ARAL). E33 provides a ligand contact to 1D-myo-inositol 2-(L-cysteinylamino)-2-deoxy-alpha-D-glucopyranoside. Acetyl-CoA is bound by residues 75–77 (LVV) and 83–88 (RRGIGT). 1D-myo-inositol 2-(L-cysteinylamino)-2-deoxy-alpha-D-glucopyranoside is bound by residues E176, K218, and E231. Residues 235–237 (VGI) and 242–248 (QGRGLGR) contribute to the acetyl-CoA site. Y269 lines the 1D-myo-inositol 2-(L-cysteinylamino)-2-deoxy-alpha-D-glucopyranoside pocket. Position 274–279 (274–279 (NTAALH)) interacts with acetyl-CoA.

It belongs to the acetyltransferase family. MshD subfamily. As to quaternary structure, monomer.

It catalyses the reaction 1D-myo-inositol 2-(L-cysteinylamino)-2-deoxy-alpha-D-glucopyranoside + acetyl-CoA = mycothiol + CoA + H(+). In terms of biological role, catalyzes the transfer of acetyl from acetyl-CoA to desacetylmycothiol (Cys-GlcN-Ins) to form mycothiol. This Rhodococcus erythropolis (strain PR4 / NBRC 100887) protein is Mycothiol acetyltransferase.